The following is a 236-amino-acid chain: Phycocyanobilin:ferredoxin oxidoreductase (236 aa).

This sequence belongs to the HY2 family.

It carries out the reaction (2R,3Z)-phycocyanobilin + 4 oxidized [2Fe-2S]-[ferredoxin] = biliverdin IXalpha + 4 reduced [2Fe-2S]-[ferredoxin] + 4 H(+). Its function is as follows. Catalyzes the four-electron reduction of biliverdin IX-alpha (2-electron reduction at both the A and D rings); the reaction proceeds via an isolatable 2-electron intermediate, 181,182-dihydrobiliverdin. The sequence is that of Phycocyanobilin:ferredoxin oxidoreductase (pcyA) from Thermosynechococcus vestitus (strain NIES-2133 / IAM M-273 / BP-1).